We begin with the raw amino-acid sequence, 415 residues long: Serine/threonine transporter SstT (415 aa).

8 helical membrane-spanning segments follow: residues 23–43 (ILIG…AAIA), 47–67 (LGTL…LMLV), 85–105 (ILFL…LFSF), 144–164 (ALLN…GFAL), 181–201 (AVTF…FGLV), 220–240 (LLVL…LLVF), 293–313 (IPLG…VLTL), and 333–353 (VVAS…LLLI).

Belongs to the dicarboxylate/amino acid:cation symporter (DAACS) (TC 2.A.23) family.

It localises to the cell inner membrane. The catalysed reaction is L-serine(in) + Na(+)(in) = L-serine(out) + Na(+)(out). It catalyses the reaction L-threonine(in) + Na(+)(in) = L-threonine(out) + Na(+)(out). Its function is as follows. Involved in the import of serine and threonine into the cell, with the concomitant import of sodium (symport system). This Klebsiella pneumoniae (strain 342) protein is Serine/threonine transporter SstT.